A 465-amino-acid polypeptide reads, in one-letter code: Kynureninase (465 aa).

Pyridoxal 5'-phosphate is bound by residues L116, T117, 144-147 (FPSD), D231, H234, and Y256. K257 is subject to N6-(pyridoxal phosphate)lysine. Pyridoxal 5'-phosphate-binding residues include W291 and N319.

The protein belongs to the kynureninase family. In terms of assembly, homodimer. The cofactor is pyridoxal 5'-phosphate.

It is found in the cytoplasm. It catalyses the reaction L-kynurenine + H2O = anthranilate + L-alanine + H(+). The catalysed reaction is 3-hydroxy-L-kynurenine + H2O = 3-hydroxyanthranilate + L-alanine + H(+). It participates in amino-acid degradation; L-kynurenine degradation; L-alanine and anthranilate from L-kynurenine: step 1/1. Its pathway is cofactor biosynthesis; NAD(+) biosynthesis; quinolinate from L-kynurenine: step 2/3. Catalyzes the cleavage of L-kynurenine (L-Kyn) and L-3-hydroxykynurenine (L-3OHKyn) into anthranilic acid (AA) and 3-hydroxyanthranilic acid (3-OHAA), respectively. The sequence is that of Kynureninase from Scheffersomyces stipitis (strain ATCC 58785 / CBS 6054 / NBRC 10063 / NRRL Y-11545) (Yeast).